Reading from the N-terminus, the 651-residue chain is MBT domain-containing protein 1 (651 aa).

The segment at 21–55 (SFGMFDGYDSCSEDTSSSSSSDESEEEVAPLPSSL) is disordered. Residues 29 to 41 (DSCSEDTSSSSSS) are compositionally biased toward low complexity. The FCS-type zinc-finger motif lies at 68-103 (PDGKSGMATCEMCGMVGVRDAFYSKTKRFCSVSCSR). Residues Cys77, Cys80, Cys97, and Cys101 each coordinate Zn(2+). MBT repeat units lie at residues 164-268 (FSWG…LVPP), 276-373 (TNWK…IGHR), 374-479 (FKRT…LTPP), and 487-583 (FKWF…LQPP). Disordered stretches follow at residues 581–610 (QPPA…YKGH) and 629–651 (TFLQ…KQEP). Residues 586–596 (QSNKDSQSNIS) show a composition bias toward low complexity. Residues 597-610 (KQKKKSKSQPYKGH) show a composition bias toward basic residues. Positions 632-643 (QGASDQESNGSG) are enriched in polar residues.

In terms of assembly, monomer. Component of the NuA4 histone acetyltransferase complex.

It localises to the nucleus. The protein localises to the chromosome. In terms of biological role, chromatin reader component of the NuA4 histone acetyltransferase complex, a multiprotein complex involved in transcriptional activation of select genes principally by acetylation of nucleosomal histones H4 and H2A. The NuA4 complex plays a direct role in repair of DNA double-strand breaks (DSBs) by promoting homologous recombination (HR). MBTD1 specifically recognizes and binds monomethylated and dimethylated 'Lys-20' on histone H4 (H4K20me1 and H4K20me2, respectively). In the NuA4 complex, MBTD1 promotes recruitment of the complex to H4K20me marks by competing with TP53BP1 for binding to H4K20me. Following recruitment to H4K20me at DNA breaks, the NuA4 complex catalyzes acetylation of 'Lys-15' on histone H2A (H2AK15), blocking the ubiquitination mark required for TP53BP1 localization at DNA breaks, thereby promoting homologous recombination (HR). This chain is MBT domain-containing protein 1, found in Xenopus tropicalis (Western clawed frog).